Reading from the N-terminus, the 151-residue chain is Deoxyuridine 5'-triphosphate nucleotidohydrolase (151 aa).

Residues 70-72 (RSG), Asn-83, 87-89 (LID), and Met-97 each bind substrate.

Belongs to the dUTPase family. Mg(2+) is required as a cofactor.

The enzyme catalyses dUTP + H2O = dUMP + diphosphate + H(+). Its pathway is pyrimidine metabolism; dUMP biosynthesis; dUMP from dCTP (dUTP route): step 2/2. This enzyme is involved in nucleotide metabolism: it produces dUMP, the immediate precursor of thymidine nucleotides and it decreases the intracellular concentration of dUTP so that uracil cannot be incorporated into DNA. The polypeptide is Deoxyuridine 5'-triphosphate nucleotidohydrolase (Pseudomonas aeruginosa (strain UCBPP-PA14)).